A 765-amino-acid chain; its full sequence is Putative maltooligosyl trehalose synthase (765 aa).

It belongs to the glycosyl hydrolase 13 family. As to quaternary structure, monomer.

The catalysed reaction is 4-[(1-&gt;4)-alpha-D-glucosyl](n-1)-D-glucose = 1-[(1-&gt;4)-alpha-D-glucosyl](n-1)-alpha-D-glucose. Catalyzes the conversion of maltooligosaccharide into the non-reducing saccharide, maltooligosyl trehalose (alpha-maltooligosyl alpha-D-glucoside) by intramolecular transglycosylation. The chain is Putative maltooligosyl trehalose synthase (treY) from Mycobacterium tuberculosis (strain CDC 1551 / Oshkosh).